A 125-amino-acid polypeptide reads, in one-letter code: Snaclec B6 (125 aa).

Disulfide bonds link Cys-2/Cys-13, Cys-30/Cys-119, and Cys-96/Cys-111. In terms of domain architecture, C-type lectin spans 9–120 (HEGHCYKVFK…CNISQYFVCQ (112 aa)). An N-linked (GlcNAc...) asparagine glycan is attached at Asn-95. N-linked (GlcNAc...) asparagine glycosylation occurs at Asn-112.

Belongs to the snaclec family. As to quaternary structure, heterodimer; disulfide-linked. Expressed by the venom gland.

Its subcellular location is the secreted. Interferes with one step of hemostasis (modulation of platelet aggregation, or coagulation cascade, for example). This Macrovipera lebetinus (Levantine viper) protein is Snaclec B6.